Consider the following 359-residue polypeptide: Spermine synthase (359 aa).

Positions S53–T304 constitute a PABS domain. Q99 contributes to the S-adenosyl 3-(methylsulfanyl)propylamine binding site. Y129 is a binding site for spermidine. An S-adenosyl 3-(methylsulfanyl)propylamine-binding site is contributed by Q130. Position 154 (D154) interacts with spermidine. S-adenosyl 3-(methylsulfanyl)propylamine-binding positions include E174 and D205–A206. Residue D224 is the Proton acceptor of the active site. Residue Y292 participates in putrescine binding.

This sequence belongs to the spermidine/spermine synthase family. As to quaternary structure, heterodimer. Component of a multiprotein complex. Interacts with SPDSYN1 and SPDSYN2. In terms of tissue distribution, expressed predominantly in stem internodes, flower buds and roots.

It catalyses the reaction S-adenosyl 3-(methylsulfanyl)propylamine + spermidine = spermine + S-methyl-5'-thioadenosine + H(+). It participates in amine and polyamine biosynthesis; spermine biosynthesis; spermine from spermidine: step 1/1. The chain is Spermine synthase (SPMS) from Arabidopsis thaliana (Mouse-ear cress).